A 515-amino-acid polypeptide reads, in one-letter code: Protein DETOXIFICATION 42 (515 aa).

The Cytoplasmic segment spans residues 1 to 35; it reads MMSEDGYNTDFPRNPLYIFFSDFRSVLKFDELGLE. Residues 36–56 form a helical membrane-spanning segment; the sequence is IARIALPAALALTADPIASLV. Residues 57-58 are Extracellular-facing; the sequence is DT. A helical transmembrane segment spans residues 59 to 79; that stretch reads AFIGQIGPVELAAVGVSIALF. At 80-168 the chain is on the cytoplasmic side; the sequence is NQVSRIAIFP…AKKRNIPSAS (89 aa). The helical transmembrane segment at 169–189 threads the bilayer; that stretch reads SALIIGGVLGLFQAVFLISAA. The Extracellular segment spans residues 190-211; the sequence is KPLLSFMGVKHDSPMMRPSQRY. Residues 212–232 form a helical membrane-spanning segment; the sequence is LSLRSLGAPAVLLSLAAQGVF. Residues 233 to 242 are Cytoplasmic-facing; that stretch reads RGFKDTTTPL. Residues 243-263 form a helical membrane-spanning segment; it reads FATVIGDVTNIILDPIFIFVF. The Extracellular portion of the chain corresponds to 264–266; the sequence is RLG. A helical membrane pass occupies residues 267–287; that stretch reads VTGAATAHVISQYLMCGILLW. Residues 288–312 are Cytoplasmic-facing; sequence KLMGQVDIFNMSTKHLQFCRFMKNG. Residues 313–333 traverse the membrane as a helical segment; that stretch reads FLLLMRVIAVTFCVTLSASLA. The Extracellular portion of the chain corresponds to 334–349; it reads AREGSTSMAAFQVCLQ. The chain crosses the membrane as a helical span at residues 350–370; it reads VWLATSLLADGYAVAGQAILA. The Cytoplasmic portion of the chain corresponds to 371–390; sequence SAFAKKDYKRAAATASRVLQ. A helical transmembrane segment spans residues 391–411; it reads LGLVLGFVLAVILGAGLHFGA. The Extracellular segment spans residues 412–423; sequence RVFTKDDKVLHL. A helical membrane pass occupies residues 424–444; sequence ISIGLPFVAGTQPINALAFVF. Over 445–453 the chain is Cytoplasmic; it reads DGVNFGASD. The helical transmembrane segment at 454–474 threads the bilayer; the sequence is FGYAAASLVMVAIVSILCLLF. At 475–480 the chain is on the extracellular side; sequence LSSTHG. The helical transmembrane segment at 481-501 threads the bilayer; it reads FIGLWFGLTIYMSLRAAVGFW. Topologically, residues 502–515 are cytoplasmic; it reads RIGTGTGPWSFLRS.

The protein belongs to the multi antimicrobial extrusion (MATE) (TC 2.A.66.1) family. In terms of tissue distribution, expressed in roots, but not in shoots. Detected in the mature regions of the root, extending from above the root-hair region to the root-shoot junction.

The protein resides in the cell membrane. Citrate transporter critical for aluminum tolerance. Responsible for citrate exudation into the rhizosphere to protect roots from aluminum toxicity. The sequence is that of Protein DETOXIFICATION 42 from Arabidopsis thaliana (Mouse-ear cress).